Here is an 87-residue protein sequence, read N- to C-terminus: Small ribosomal subunit protein bS18 (87 aa).

The disordered stretch occupies residues 1 to 21 (MRHKPTPPKGNKSLGNALASK).

This sequence belongs to the bacterial ribosomal protein bS18 family. Part of the 30S ribosomal subunit. Forms a tight heterodimer with protein bS6.

In terms of biological role, binds as a heterodimer with protein bS6 to the central domain of the 16S rRNA, where it helps stabilize the platform of the 30S subunit. The protein is Small ribosomal subunit protein bS18 of Chlorobium phaeobacteroides (strain DSM 266 / SMG 266 / 2430).